The primary structure comprises 750 residues: 1,4-alpha-glucan branching enzyme GlgB (750 aa).

Residue aspartate 425 is the Nucleophile of the active site. Residue glutamate 478 is the Proton donor of the active site.

The protein belongs to the glycosyl hydrolase 13 family. GlgB subfamily. In terms of assembly, monomer.

The catalysed reaction is Transfers a segment of a (1-&gt;4)-alpha-D-glucan chain to a primary hydroxy group in a similar glucan chain.. The protein operates within glycan biosynthesis; glycogen biosynthesis. Its function is as follows. Catalyzes the formation of the alpha-1,6-glucosidic linkages in glycogen by scission of a 1,4-alpha-linked oligosaccharide from growing alpha-1,4-glucan chains and the subsequent attachment of the oligosaccharide to the alpha-1,6 position. The polypeptide is 1,4-alpha-glucan branching enzyme GlgB (Cupriavidus pinatubonensis (strain JMP 134 / LMG 1197) (Cupriavidus necator (strain JMP 134))).